The sequence spans 676 residues: MNDKDLEIEYLKKIDLFQRHNKHYYDKNKPIVSDQEFDLLKKDIIDLERKYKFLKSEYSPTKSIGFKPSKNFQKIKHKVPMLSLGNAFNEEDLKNFEKKIINFLSLKDVNTIEYSAEPKIDGISASLIYIDGKLTKGLSRGDGNEGEDITQNLKTIKDIPLEITKSNFPKEIDIRGEVFIENNDFKKIKDKFANPRNAASGSLRQKNSLITAKIPLKFIAYTYGYEKKMNIKNQTSFLENLKLWGFKTNPFNKKIIGVKNLMLNHKELEEKRKELAFDIDGIVYKVNDFDLQKRLGFAANAPRWAIAHKFSANSSISEIMNIEIQIGRTGALTPVAKIKPVNIGGVIVSNATLHNEDEIVRKDIRVGDTVTVERAGDVIPHVVSVDLKKRKQNSKKFIFPLKCPSCGSKTIKDYNETTKRQDAVRRCASEGFECEKIAIERIKHFVSKDAFNIDGFGKKIVENFWNLKLVRLPQDIFKLNYNKIEELEGWGKLSVANLRFSIEEKKNISLERFIYSLGIRHIGQENAKLIARHLKTASNFFRLSGEKNIESLSNIDGIGITQIQSIKKFFLNKTNLKVLSELEKNLLIKDVILINNNGLLKNKTFMLTGKLNGISRAEAKSLIEQNSGKIISNVNKKLDYLIAGDKPTLKKINTAKEWNIKIINQTEWLKMLNKSG.

NAD(+)-binding positions include 34-38 (DQEFD), 83-84 (SL), and E117. K119 acts as the N6-AMP-lysine intermediate in catalysis. Positions 140, 177, 285, and 309 each coordinate NAD(+). 4 residues coordinate Zn(2+): C403, C406, C427, and C434. A BRCT domain is found at 595-676 (NNNGLLKNKT…EWLKMLNKSG (82 aa)).

Belongs to the NAD-dependent DNA ligase family. LigA subfamily. It depends on Mg(2+) as a cofactor. The cofactor is Mn(2+).

It carries out the reaction NAD(+) + (deoxyribonucleotide)n-3'-hydroxyl + 5'-phospho-(deoxyribonucleotide)m = (deoxyribonucleotide)n+m + AMP + beta-nicotinamide D-nucleotide.. In terms of biological role, DNA ligase that catalyzes the formation of phosphodiester linkages between 5'-phosphoryl and 3'-hydroxyl groups in double-stranded DNA using NAD as a coenzyme and as the energy source for the reaction. It is essential for DNA replication and repair of damaged DNA. The sequence is that of DNA ligase from Pelagibacter ubique (strain HTCC1062).